A 426-amino-acid chain; its full sequence is MAAIEAVGAREILDSRGNPTVEVEVLLEDGTVSRAAVPSGASTGAFEAYELRDGDKGRYLGKGVEKAVDAVLDEIGPAIEGFEASDQRIVDEAMIELDGTDNKKRLGANAMLGVSLAVAKAAADSADLPLFRYLGGPNAHVLPVPMMNIINGGAHADTGVDIQEFMILPIGAETFSEGLRWGVETYHSLKALLKSKGLNTGLGDEGGFAPELEHNRAALDLIAEAIEKAGFTVGSQIALGLDVASTEFFENGVYRFEGQDRTAAEMSAYYTDLANNYPLVSIEDPLAEDDWEGWAHLNAEIGSTLQLVGDDLFVTNPKRLAQGIQQKAANSILVKVNQIGTLTETLDAVSLAQRSGMTAVLSHRSGETEDTTIADLAVATDSGQIKTGAPARSERVAKYNQLLRIEEELGEAAVYAGRSAFPRYQG.

Glutamine 163 provides a ligand contact to (2R)-2-phosphoglycerate. Glutamate 205 functions as the Proton donor in the catalytic mechanism. The Mg(2+) site is built by aspartate 242, glutamate 283, and aspartate 310. Residues lysine 335, arginine 364, serine 365, and lysine 386 each coordinate (2R)-2-phosphoglycerate. Lysine 335 serves as the catalytic Proton acceptor.

It belongs to the enolase family. Mg(2+) is required as a cofactor.

It localises to the cytoplasm. The protein localises to the secreted. It is found in the cell surface. The catalysed reaction is (2R)-2-phosphoglycerate = phosphoenolpyruvate + H2O. It functions in the pathway carbohydrate degradation; glycolysis; pyruvate from D-glyceraldehyde 3-phosphate: step 4/5. Catalyzes the reversible conversion of 2-phosphoglycerate (2-PG) into phosphoenolpyruvate (PEP). It is essential for the degradation of carbohydrates via glycolysis. This chain is Enolase, found in Leifsonia xyli subsp. xyli (strain CTCB07).